We begin with the raw amino-acid sequence, 103 residues long: Signal recognition particle 19 kDa protein (103 aa).

The protein belongs to the SRP19 family. Part of the signal recognition particle protein translocation system, which is composed of SRP and FtsY. Archaeal SRP consists of a 7S RNA molecule of 300 nucleotides and two protein subunits: SRP54 and SRP19.

The protein resides in the cytoplasm. In terms of biological role, involved in targeting and insertion of nascent membrane proteins into the cytoplasmic membrane. Binds directly to 7S RNA and mediates binding of the 54 kDa subunit of the SRP. This is Signal recognition particle 19 kDa protein from Hyperthermus butylicus (strain DSM 5456 / JCM 9403 / PLM1-5).